The chain runs to 207 residues: Large ribosomal subunit protein uL4 (207 aa).

The interval A50 to G76 is disordered.

It belongs to the universal ribosomal protein uL4 family. As to quaternary structure, part of the 50S ribosomal subunit.

Functionally, one of the primary rRNA binding proteins, this protein initially binds near the 5'-end of the 23S rRNA. It is important during the early stages of 50S assembly. It makes multiple contacts with different domains of the 23S rRNA in the assembled 50S subunit and ribosome. In terms of biological role, forms part of the polypeptide exit tunnel. In Staphylococcus aureus (strain JH9), this protein is Large ribosomal subunit protein uL4.